Consider the following 430-residue polypeptide: Toxin coregulated pilus biosynthesis protein B (430 aa).

Residues 351–366 show a composition bias toward polar residues; the sequence is NFSSESAKDSQGTTQK. A disordered region spans residues 351 to 371; the sequence is NFSSESAKDSQGTTQKDGSKG.

Functionally, involved in TCP pilus biogenesis. This Vibrio cholerae serotype O1 (strain ATCC 39315 / El Tor Inaba N16961) protein is Toxin coregulated pilus biosynthesis protein B (tcpB).